Here is a 137-residue protein sequence, read N- to C-terminus: Protein BNS1 (137 aa).

Functionally, component of the FEAR (CDC14 early anaphase release) network which promotes CDC14 release from the nucleolus during early anaphase and is required for the efficient segregation of telomeric and nucleolar regions. Although BNS1 can partially compensate for a lack of SPO12 function when overexpressed, it does not appear to play any role in controlling meiotic nuclear division. The chain is Protein BNS1 (BNS1) from Saccharomyces cerevisiae (strain ATCC 204508 / S288c) (Baker's yeast).